We begin with the raw amino-acid sequence, 335 residues long: Glyceraldehyde-3-phosphate dehydrogenase 1 (335 aa).

NAD(+)-binding positions include 13–14 (TI) and glycine 111. Residue 140 to 142 (SCN) coordinates D-glyceraldehyde 3-phosphate. The Nucleophile role is filled by cysteine 141. Arginine 169 provides a ligand contact to NAD(+). D-glyceraldehyde 3-phosphate contacts are provided by residues threonine 171 and 195–196 (HG). Residue glutamine 300 participates in NAD(+) binding.

Belongs to the glyceraldehyde-3-phosphate dehydrogenase family. In terms of assembly, homotetramer.

It localises to the cytoplasm. It catalyses the reaction D-glyceraldehyde 3-phosphate + phosphate + NADP(+) = (2R)-3-phospho-glyceroyl phosphate + NADPH + H(+). The catalysed reaction is D-glyceraldehyde 3-phosphate + phosphate + NAD(+) = (2R)-3-phospho-glyceroyl phosphate + NADH + H(+). The protein operates within carbohydrate degradation; glycolysis; pyruvate from D-glyceraldehyde 3-phosphate: step 1/5. The sequence is that of Glyceraldehyde-3-phosphate dehydrogenase 1 (gapA) from Methanosarcina acetivorans (strain ATCC 35395 / DSM 2834 / JCM 12185 / C2A).